The sequence spans 159 residues: Small ribosomal subunit protein uS9 (159 aa).

This sequence belongs to the universal ribosomal protein uS9 family.

This chain is Small ribosomal subunit protein uS9, found in Methylocella silvestris (strain DSM 15510 / CIP 108128 / LMG 27833 / NCIMB 13906 / BL2).